The following is a 100-amino-acid chain: Putative septation protein SpoVG (100 aa).

Belongs to the SpoVG family.

Functionally, could be involved in septation. This Staphylococcus aureus (strain JH1) protein is Putative septation protein SpoVG.